We begin with the raw amino-acid sequence, 721 residues long: DNA ligase (721 aa).

NAD(+)-binding positions include 42–46, 91–92, and Glu-125; these read DAEYD and SL. The active-site N6-AMP-lysine intermediate is the Lys-127. Positions 148, 184, 300, and 324 each coordinate NAD(+). Residues Cys-430, Cys-433, Cys-448, and Cys-454 each coordinate Zn(2+). A BRCT domain is found at 642–721; sequence STGSPVEGKT…DAWFTLVGEE (80 aa).

This sequence belongs to the NAD-dependent DNA ligase family. LigA subfamily. The cofactor is Mg(2+). It depends on Mn(2+) as a cofactor.

The catalysed reaction is NAD(+) + (deoxyribonucleotide)n-3'-hydroxyl + 5'-phospho-(deoxyribonucleotide)m = (deoxyribonucleotide)n+m + AMP + beta-nicotinamide D-nucleotide.. In terms of biological role, DNA ligase that catalyzes the formation of phosphodiester linkages between 5'-phosphoryl and 3'-hydroxyl groups in double-stranded DNA using NAD as a coenzyme and as the energy source for the reaction. It is essential for DNA replication and repair of damaged DNA. The sequence is that of DNA ligase from Brucella anthropi (strain ATCC 49188 / DSM 6882 / CCUG 24695 / JCM 21032 / LMG 3331 / NBRC 15819 / NCTC 12168 / Alc 37) (Ochrobactrum anthropi).